Reading from the N-terminus, the 374-residue chain is tRNA-specific 2-thiouridylase MnmA (374 aa).

ATP-binding positions include 13-20 (GMSGGVDS) and Met-39. The interval 99–101 (NPD) is interaction with target base in tRNA. The Nucleophile role is filled by Cys-104. Cys-104 and Cys-201 are joined by a disulfide. Gly-128 is an ATP binding site. An interaction with tRNA region spans residues 151-153 (KDQ). Residue Cys-201 is the Cysteine persulfide intermediate of the active site. An interaction with tRNA region spans residues 313-314 (RY).

It belongs to the MnmA/TRMU family.

It localises to the cytoplasm. It catalyses the reaction S-sulfanyl-L-cysteinyl-[protein] + uridine(34) in tRNA + AH2 + ATP = 2-thiouridine(34) in tRNA + L-cysteinyl-[protein] + A + AMP + diphosphate + H(+). Its function is as follows. Catalyzes the 2-thiolation of uridine at the wobble position (U34) of tRNA, leading to the formation of s(2)U34. The polypeptide is tRNA-specific 2-thiouridylase MnmA (Streptococcus suis (strain 98HAH33)).